Reading from the N-terminus, the 3103-residue chain is Extracellular matrix protein 3 (3103 aa).

The first 19 residues, 1 to 19 (MASALLCFLAAILPGMIAA), serve as a signal peptide directing secretion. At 20–3047 (QNTWVLGTSD…TYELAPKGTN (3028 aa)) the chain is on the extracellular side. CSPG repeat units lie at residues 289–388 (PPSL…LEIV), 411–499 (APVV…FRMT), 520–630 (APIV…FRVV), 656–762 (PPEM…FVVQ), 784–875 (QPPT…LEIT), 901–993 (LPPG…LTLS), 1022–1124 (APNV…FRCT), 1145–1238 (EEPQ…VLLT), 1259–1357 (TPRL…FDIT), 1378–1470 (VHPS…FQVT), 1490–1579 (KEPV…FIVT), and 1613–1710 (APQI…VEVR). N330 and N453 each carry an N-linked (GlcNAc...) asparagine glycan. 7 N-linked (GlcNAc...) asparagine glycosylation sites follow: N989, N1024, N1042, N1207, N1294, N1321, and N1327. N1542, N1674, N1679, N1725, and N1739 each carry an N-linked (GlcNAc...) asparagine glycan. Calx-beta domains follow at residues 1717–1816 (LPNQ…IILH), 1829–1942 (AVVT…VKLS), 1956–2062 (NVII…LVLN), and 2077–2179 (ITIN…LVLG). Residues N2080, N2195, N2274, N2385, and N2932 are each glycosylated (N-linked (GlcNAc...) asparagine). One can recognise a Calx-beta 5 domain in the interval 2197-2302 (TVVTVHDVGD…MREAFTLHIT (106 aa)). Positions 2983–3013 (SSGIGKRETEHHAISSRQRRQANSEALVDPA) are disordered. The helical transmembrane segment at 3048–3068 (VVMIAVVIGVILIILLVALVI) threads the bilayer. Topologically, residues 3069-3103 (GVVVRRRQAKQQPVVVVNGSAKVVSNVHFDDNTEV) are cytoplasmic.

The protein belongs to the FRAS1 family. In terms of tissue distribution, component of extracellular matrix fibers that interact with PMC filopodia during gastrulation (at protein level).

The protein localises to the cell membrane. In terms of biological role, extracellular matrix protein that may serve as substrate for the migratory primary mesenchyme cells (PMCs), the interaction possibly providing guidance information to migrating PMCs. This chain is Extracellular matrix protein 3 (ECM3), found in Lytechinus variegatus (Green sea urchin).